The following is a 178-amino-acid chain: Enhancer of split m5 protein (178 aa).

One can recognise a bHLH domain in the interval 18 to 73; the sequence is YLKVKKPLLERQRRARMNKCLDTLKTLVAEFQGDDAILRMDKAEMLEAALVFMRKQ. The Orange domain maps to 89 to 122; that stretch reads FKNGYMNAVSEISRVMACTPAMSVDVGKTVMTHL. The span at 135-165 shows a compositional bias: polar residues; that stretch reads VQTSVTTSTPRPLSPASSGYHSDNEDSQSAA. The segment at 135-178 is disordered; sequence VQTSVTTSTPRPLSPASSGYHSDNEDSQSAASPKPVEETMWRPW. The segment covering 169–178 has biased composition (basic and acidic residues); it reads PVEETMWRPW. Positions 175-178 match the WRPW motif motif; sequence WRPW.

In terms of assembly, transcription repression requires formation of a complex with a corepressor protein (Groucho). Forms homodimers.

The protein localises to the nucleus. Its function is as follows. Participates in the control of cell fate choice by uncommitted neuroectodermal cells in the embryo. Transcriptional repressor. Binds DNA on N-box motifs: 5'-CACNAG-3'. This Drosophila melanogaster (Fruit fly) protein is Enhancer of split m5 protein.